The primary structure comprises 89 residues: Arminin 7591 (89 aa).

The first 18 residues, Met1–Ser18, serve as a signal peptide directing secretion. The propeptide occupies Lys19 to Ala58. At Leu86 the chain carries Leucine amide.

Belongs to the arminin family. Expressed in entodermal epithelium along the body column.

The protein resides in the secreted. It is found in the target cell membrane. Functionally, antimicrobial peptide with a broad-spectrum antimicrobial activity. Keeps its antibacterial activity under a wide range of salt concentrations that mimic physiological conditions of human blood, which is surprising, since Hydra is an obligate freshwater animal with nearly no salt tolerance. Does not affect red blood cells. In Hydra vulgaris (Hydra), this protein is Arminin 7591.